The primary structure comprises 150 residues: Large ribosomal subunit protein bL9 (150 aa).

This sequence belongs to the bacterial ribosomal protein bL9 family.

In terms of biological role, binds to the 23S rRNA. This Leuconostoc citreum (strain KM20) protein is Large ribosomal subunit protein bL9.